The sequence spans 146 residues: Ribonuclease H (146 aa).

The region spanning 4-145 is the RNase H type-1 domain; that stretch reads ELNKVVIYTD…ADILARSQIS (142 aa). Mg(2+) contacts are provided by aspartate 13, glutamate 51, aspartate 73, and aspartate 137.

It belongs to the RNase H family. Monomer. The cofactor is Mg(2+).

The protein localises to the cytoplasm. It carries out the reaction Endonucleolytic cleavage to 5'-phosphomonoester.. Endonuclease that specifically degrades the RNA of RNA-DNA hybrids. This Ehrlichia canis (strain Jake) protein is Ribonuclease H.